Here is a 256-residue protein sequence, read N- to C-terminus: Cell division protein ZapD (256 aa).

The protein belongs to the ZapD family. Interacts with FtsZ.

It is found in the cytoplasm. Functionally, cell division factor that enhances FtsZ-ring assembly. Directly interacts with FtsZ and promotes bundling of FtsZ protofilaments, with a reduction in FtsZ GTPase activity. The protein is Cell division protein ZapD of Aromatoleum aromaticum (strain DSM 19018 / LMG 30748 / EbN1) (Azoarcus sp. (strain EbN1)).